Here is a 718-residue protein sequence, read N- to C-terminus: Probable trehalose-phosphatase (718 aa).

The disordered stretch occupies residues 449-470 (LSMDQTGHKKVDAKKKPGIRKK). Residues 459 to 470 (VDAKKKPGIRKK) are compositionally biased toward basic residues.

It in the N-terminal section; belongs to the glycosyltransferase 20 family. In the C-terminal section; belongs to the trehalose phosphatase family.

The catalysed reaction is alpha,alpha-trehalose 6-phosphate + H2O = alpha,alpha-trehalose + phosphate. In Encephalitozoon cuniculi (strain GB-M1) (Microsporidian parasite), this protein is Probable trehalose-phosphatase.